A 216-amino-acid chain; its full sequence is Peptide methionine sulfoxide reductase MsrA (216 aa).

Residue Cys-54 is part of the active site.

This sequence belongs to the MsrA Met sulfoxide reductase family.

The enzyme catalyses L-methionyl-[protein] + [thioredoxin]-disulfide + H2O = L-methionyl-(S)-S-oxide-[protein] + [thioredoxin]-dithiol. It catalyses the reaction [thioredoxin]-disulfide + L-methionine + H2O = L-methionine (S)-S-oxide + [thioredoxin]-dithiol. Has an important function as a repair enzyme for proteins that have been inactivated by oxidation. Catalyzes the reversible oxidation-reduction of methionine sulfoxide in proteins to methionine. In Xanthomonas euvesicatoria pv. vesicatoria (strain 85-10) (Xanthomonas campestris pv. vesicatoria), this protein is Peptide methionine sulfoxide reductase MsrA.